Reading from the N-terminus, the 189-residue chain is Cytochrome b6-f complex subunit 4 (189 aa).

The next 3 helical transmembrane spans lie at 36-56, 103-123, and 139-159; these read LSYI…GLAV, LLGV…PFLE, and TVSL…ALPI.

The protein belongs to the cytochrome b family. PetD subfamily. The 4 large subunits of the cytochrome b6-f complex are cytochrome b6, subunit IV (17 kDa polypeptide, petD), cytochrome f and the Rieske protein, while the 4 small subunits are petG, petL, petM and petN. The complex functions as a dimer.

It localises to the plastid. The protein localises to the chloroplast thylakoid membrane. Component of the cytochrome b6-f complex, which mediates electron transfer between photosystem II (PSII) and photosystem I (PSI), cyclic electron flow around PSI, and state transitions. The sequence is that of Cytochrome b6-f complex subunit 4 from Pinus koraiensis (Korean pine).